A 187-amino-acid polypeptide reads, in one-letter code: Elongation factor P (187 aa).

It belongs to the elongation factor P family.

The protein localises to the cytoplasm. It functions in the pathway protein biosynthesis; polypeptide chain elongation. In terms of biological role, involved in peptide bond synthesis. Stimulates efficient translation and peptide-bond synthesis on native or reconstituted 70S ribosomes in vitro. Probably functions indirectly by altering the affinity of the ribosome for aminoacyl-tRNA, thus increasing their reactivity as acceptors for peptidyl transferase. The polypeptide is Elongation factor P (Mycobacterium leprae (strain Br4923)).